Here is a 276-residue protein sequence, read N- to C-terminus: Dermonecrotic toxin LdSicTox-alphaIB2 (276 aa).

Histidine 5 is an active-site residue. 2 residues coordinate Mg(2+): glutamate 25 and aspartate 27. Residue histidine 41 is the Nucleophile of the active site. Cystine bridges form between cysteine 45–cysteine 51 and cysteine 47–cysteine 190. Residue aspartate 85 participates in Mg(2+) binding. An N-linked (GlcNAc...) asparagine glycan is attached at asparagine 253.

This sequence belongs to the arthropod phospholipase D family. Class II subfamily. It depends on Mg(2+) as a cofactor. In terms of tissue distribution, expressed by the venom gland.

Its subcellular location is the secreted. It catalyses the reaction an N-(acyl)-sphingosylphosphocholine = an N-(acyl)-sphingosyl-1,3-cyclic phosphate + choline. The catalysed reaction is an N-(acyl)-sphingosylphosphoethanolamine = an N-(acyl)-sphingosyl-1,3-cyclic phosphate + ethanolamine. It carries out the reaction a 1-acyl-sn-glycero-3-phosphocholine = a 1-acyl-sn-glycero-2,3-cyclic phosphate + choline. The enzyme catalyses a 1-acyl-sn-glycero-3-phosphoethanolamine = a 1-acyl-sn-glycero-2,3-cyclic phosphate + ethanolamine. In terms of biological role, dermonecrotic toxins cleave the phosphodiester linkage between the phosphate and headgroup of certain phospholipids (sphingolipid and lysolipid substrates), forming an alcohol (often choline) and a cyclic phosphate. This toxin acts on sphingomyelin (SM). It may also act on ceramide phosphoethanolamine (CPE), lysophosphatidylcholine (LPC) and lysophosphatidylethanolamine (LPE), but not on lysophosphatidylserine (LPS), and lysophosphatidylglycerol (LPG). It acts by transphosphatidylation, releasing exclusively cyclic phosphate products as second products. Induces dermonecrosis, hemolysis, increased vascular permeability, edema, inflammatory response, and platelet aggregation. The sequence is that of Dermonecrotic toxin LdSicTox-alphaIB2 from Loxosceles deserta (Desert recluse spider).